The primary structure comprises 282 residues: Eukaryotic translation initiation factor 3 subunit G (282 aa).

The tract at residues 1–27 (MSSSKSLDWADDEDYGTGLPSIQTFDN) is disordered. Ser160 and Ser164 each carry phosphoserine. An RRM domain is found at 202 to 280 (ATLRVTNLSD…LILRCEFSKP (79 aa)).

The protein belongs to the eIF-3 subunit G family. Component of the eukaryotic translation initiation factor 3 (eIF-3) complex. The eIF-3 complex appears to include tif32/eif3a, SPAC25G10.08/eif3b, tif33/eif3c, SPBC4C3.07/eif3f, tif35/eif3g and sum1/eif3i. This set of common subunits may also associate exclusively with either moe1/eif3d and int6/eif3e, or with SPAC821.05/eif3h and SPAC1751.03/eif3m. The eIF-3 complex may also include SPAC3A12.13c/eif3j.

It localises to the cytoplasm. In terms of biological role, RNA-binding component of the eukaryotic translation initiation factor 3 (eIF-3) complex, which is involved in protein synthesis of a specialized repertoire of mRNAs and, together with other initiation factors, stimulates binding of mRNA and methionyl-tRNAi to the 40S ribosome. The eIF-3 complex specifically targets and initiates translation of a subset of mRNAs involved in cell proliferation. This subunit can bind 18S rRNA. This chain is Eukaryotic translation initiation factor 3 subunit G (tif35), found in Schizosaccharomyces pombe (strain 972 / ATCC 24843) (Fission yeast).